The following is an 883-amino-acid chain: Brevican core protein (883 aa).

Positions 1–22 (MIPLLLSLLAALVLTQAPAALA) are cleaved as a signal peptide. Positions 35–154 (FRVRIGATQL…SSDAVEVKVK (120 aa)) constitute an Ig-like V-type domain. Intrachain disulfides connect C56/C136, C178/C249, C202/C223, C276/C351, and C300/C321. N-linked (GlcNAc...) asparagine glycosylation is present at N129. Link domains follow at residues 156 to 251 (VVFL…YCYA) and 256 to 353 (GELF…YCFR). At S224 the chain carries Phosphoserine. N336 carries N-linked (GlcNAc...) asparagine glycosylation. Positions 402–592 (SIPISEDGGG…LETPSEEKSG (191 aa)) are disordered. S413 bears the Phosphoserine mark. Residue S413 is glycosylated (O-linked (Xyl...) (chondroitin sulfate) serine). Acidic residues-rich tracts occupy residues 440 to 451 (SSEEEGVALEEE) and 459 to 468 (ALEEEKEQED). Residues 479–495 (PLPTGSETEHSLSQVSP) show a composition bias toward polar residues. The segment covering 581–592 (RELETPSEEKSG) has biased composition (basic and acidic residues). The 37-residue stretch at 622-658 (SSGDCIPSPCHNGGTCLEEKEGFRCLCLPGYGGDLCD) folds into the EGF-like domain. 8 cysteine pairs are disulfide-bonded: C626–C637, C631–C646, C648–C657, C664–C675, C692–C784, C760–C776, C791–C834, and C820–C847. The C-type lectin domain maps to 658–786 (DVGLHFCSPG…NYHLSYTCKM (129 aa)). The 61-residue stretch at 789-849 (VSCGPPPQLP…WEAPQISCVP (61 aa)) folds into the Sushi domain. Residues 854–883 (RALRSMDAPEGPRGQLSRHRKAPLTPPSSL) are disordered.

This sequence belongs to the aggrecan/versican proteoglycan family. Interacts with TNR. In terms of processing, O-glycosylated; contains chondroitin sulfate. As to expression, expressed in the retina, specifically around the inner and outer segments of photoreceptors, retinal pigment epithelium, outer plexiform layer, and the ganglion cell layer (at protein level). Brain. Expressed in the brainstem and cerebellum in a perineuronal net pattern.

It localises to the secreted. It is found in the extracellular space. The protein localises to the extracellular matrix. In terms of biological role, may play a role in the terminally differentiating and the adult nervous system during postnatal development. Could stabilize interactions between hyaluronan (HA) and brain proteoglycans. In Mus musculus (Mouse), this protein is Brevican core protein (Bcan).